A 416-amino-acid polypeptide reads, in one-letter code: Muscle-specific homeobox protein tinman (416 aa).

2 stretches are compositionally biased toward polar residues: residues 1 to 11 (MLQHHQQQAQS) and 18 to 33 (YTQSPSPGSLTNADAL). Disordered regions lie at residues 1 to 33 (MLQHHQQQAQSGGYYDHYTQSPSPGSLTNADAL), 246 to 305 (TASN…RKPR), and 391 to 416 (VMWPPTMQQSQQQQQHHAQQQQMQHM). Over residues 281-295 (NSISGNSNPGSNSGS) the composition is skewed to low complexity. Residues 301–360 (KRKPRVLFSQAQVLELECRFRLKKYLTGAEREIIAQKLNLSATQVKIWFQNRRYKSKRGD) constitute a DNA-binding region (homeobox). Residues 397 to 416 (MQQSQQQQQHHAQQQQMQHM) show a composition bias toward low complexity.

It localises to the nucleus. Functionally, required for the development of heart and visceral muscle; for the formation of somatic muscles. Has a crucial function in the early mesodermal subdivisions. The chain is Muscle-specific homeobox protein tinman (tin) from Drosophila melanogaster (Fruit fly).